We begin with the raw amino-acid sequence, 514 residues long: Peptide chain release factor 3 (514 aa).

The tr-type G domain maps to 8–268; it reads KKRRTFAIIS…IFLKFAPEPH (261 aa). GTP contacts are provided by residues 17 to 24, 85 to 89, and 139 to 142; these read SHPDAGKT, DTPGH, and NKLD.

It belongs to the TRAFAC class translation factor GTPase superfamily. Classic translation factor GTPase family. PrfC subfamily.

The protein localises to the cytoplasm. Its function is as follows. Increases the formation of ribosomal termination complexes and stimulates activities of RF-1 and RF-2. It binds guanine nucleotides and has strong preference for UGA stop codons. It may interact directly with the ribosome. The stimulation of RF-1 and RF-2 is significantly reduced by GTP and GDP, but not by GMP. This Streptococcus pneumoniae (strain P1031) protein is Peptide chain release factor 3.